Consider the following 422-residue polypeptide: MSEAEKQAVSFACQRCLQPIVLDEQLEKISVHAMAELSLPIYGDNGNTLDPQDASSFDHFVPPYRLTDSINGTGFMLVSDGRDNKKMSAAFKLKAELFDCLSSNSEIDHPLCEECADSMLEIMDRELRIAEDEWDVYKAYLDELEQQRVAPNVEALDKELDELKRSEQQLLSELKELKKEEQSLNDAIAEEEQEREELHEQEESYWREYTKHRRELMLTEDDKRSLECQIAYSKQQLDKLRDTNIFNITFHIWHAGHFGTINNFRLGRLPSVSVDWSEINAAWGQTVLLLSALARKIGLTFERYRVVPFGNHSYVEVLGENRELPLYGSGGFKFFWDTKFDAAMVAFLDCLTQFQKEVEKRDTEFLLPYKMEKGKIIDPSTGNSYSIKIQFNSEEQWTKALKFMLTNLKWGLAWVSSQFVSP.

Residues 119 to 243 (MLEIMDRELR…KQQLDKLRDT (125 aa)) adopt a coiled-coil conformation. Positions 182 to 201 (QSLNDAIAEEEQEREELHEQ) are disordered.

Belongs to the beclin family. Interacts with Rab18, preferentially binding to the GTP-bound form.

In terms of biological role, plays a central role in autophagy. The polypeptide is Beclin-1-like protein (Drosophila melanogaster (Fruit fly)).